The primary structure comprises 309 residues: L-aminoadipate-semialdehyde dehydrogenase-phosphopantetheinyl transferase (309 aa).

Residues R47, 86–91 (RTAKGK), and 108–111 (NISH) contribute to the CoA site. D129 and E181 together coordinate Mg(2+). 181–185 (ESFIK) contacts CoA. S258 is subject to Phosphoserine.

This sequence belongs to the P-Pant transferase superfamily. AcpS family. In terms of assembly, monomer. Mg(2+) is required as a cofactor. As to expression, detected in heart, skeletal muscle, placenta, testis, brain, pancreas, liver and kidney.

Its subcellular location is the cytoplasm. The protein resides in the cytosol. The enzyme catalyses apo-[ACP] + CoA = holo-[ACP] + adenosine 3',5'-bisphosphate + H(+). It catalyses the reaction apo-[ACP] + acetyl-CoA = acetyl-[ACP] + adenosine 3',5'-bisphosphate + H(+). Catalyzes the post-translational modification of target proteins by phosphopantetheine. Can transfer the 4'-phosphopantetheine moiety from coenzyme A, regardless of whether the CoA is presented in the free thiol form or as an acetyl thioester, to a serine residue of a broad range of acceptors including the acyl carrier domain of FASN. In Homo sapiens (Human), this protein is L-aminoadipate-semialdehyde dehydrogenase-phosphopantetheinyl transferase (AASDHPPT).